Here is a 264-residue protein sequence, read N- to C-terminus: Thymidylate synthase (264 aa).

DUMP contacts are provided by residues arginine 21 and 126–127 (RR). Catalysis depends on cysteine 146, which acts as the Nucleophile. Residues 166–169 (RSAD), asparagine 177, and 207–209 (HLY) each bind dUMP. Residue aspartate 169 participates in (6R)-5,10-methylene-5,6,7,8-tetrahydrofolate binding. A (6R)-5,10-methylene-5,6,7,8-tetrahydrofolate-binding site is contributed by alanine 263.

The protein belongs to the thymidylate synthase family. Bacterial-type ThyA subfamily. In terms of assembly, homodimer.

The protein localises to the cytoplasm. The catalysed reaction is dUMP + (6R)-5,10-methylene-5,6,7,8-tetrahydrofolate = 7,8-dihydrofolate + dTMP. It functions in the pathway pyrimidine metabolism; dTTP biosynthesis. Catalyzes the reductive methylation of 2'-deoxyuridine-5'-monophosphate (dUMP) to 2'-deoxythymidine-5'-monophosphate (dTMP) while utilizing 5,10-methylenetetrahydrofolate (mTHF) as the methyl donor and reductant in the reaction, yielding dihydrofolate (DHF) as a by-product. This enzymatic reaction provides an intracellular de novo source of dTMP, an essential precursor for DNA biosynthesis. The protein is Thymidylate synthase of Bradyrhizobium sp. (strain BTAi1 / ATCC BAA-1182).